A 179-amino-acid polypeptide reads, in one-letter code: Transcription factor E (179 aa).

The 102-residue stretch at 1 to 102 (MAKKKVKYTF…YWRFDSRKAA (102 aa)) folds into the HTH TFE/IIEalpha-type domain.

This sequence belongs to the TFE family. Monomer. Interaction with RNA polymerase subunits RpoF and RpoE is necessary for Tfe stimulatory transcription activity. Able to interact with Tbp and RNA polymerase in the absence of DNA promoter. Interacts both with the preinitiation and elongation complexes.

Transcription factor that plays a role in the activation of archaeal genes transcribed by RNA polymerase. Facilitates transcription initiation by enhancing TATA-box recognition by TATA-box-binding protein (Tbp), and transcription factor B (Tfb) and RNA polymerase recruitment. Not absolutely required for transcription in vitro, but particularly important in cases where Tbp or Tfb function is not optimal. It dynamically alters the nucleic acid-binding properties of RNA polymerases by stabilizing the initiation complex and destabilizing elongation complexes. Seems to translocate with the RNA polymerase following initiation and acts by binding to the non template strand of the transcription bubble in elongation complexes. The sequence is that of Transcription factor E from Methanosphaera stadtmanae (strain ATCC 43021 / DSM 3091 / JCM 11832 / MCB-3).